The primary structure comprises 36 residues: MTAAYLPSILVPLVGLVFPAIAMASLFLYIEEQQIS.

The helical transmembrane segment at 9 to 29 (ILVPLVGLVFPAIAMASLFLY) threads the bilayer.

This sequence belongs to the PsaI family.

It localises to the plastid. The protein resides in the chloroplast thylakoid membrane. Functionally, may help in the organization of the PsaL subunit. This is Photosystem I reaction center subunit VIII from Oltmannsiellopsis viridis (Marine flagellate).